The primary structure comprises 390 residues: Chorismate synthase 1 (390 aa).

NADP(+)-binding residues include arginine 39 and arginine 45. The interval glutamate 95 to glycine 117 is disordered. Residues arginine 132–serine 134, asparagine 253–alanine 254, glycine 298, lysine 313–threonine 317, and arginine 339 contribute to the FMN site.

The protein belongs to the chorismate synthase family. In terms of assembly, homotetramer. FMNH2 serves as cofactor.

It catalyses the reaction 5-O-(1-carboxyvinyl)-3-phosphoshikimate = chorismate + phosphate. It participates in metabolic intermediate biosynthesis; chorismate biosynthesis; chorismate from D-erythrose 4-phosphate and phosphoenolpyruvate: step 7/7. Catalyzes the anti-1,4-elimination of the C-3 phosphate and the C-6 proR hydrogen from 5-enolpyruvylshikimate-3-phosphate (EPSP) to yield chorismate, which is the branch point compound that serves as the starting substrate for the three terminal pathways of aromatic amino acid biosynthesis. This reaction introduces a second double bond into the aromatic ring system. This is Chorismate synthase 1 from Bacillus thuringiensis (strain Al Hakam).